Here is a 1029-residue protein sequence, read N- to C-terminus: Protein SUPPRESSOR OF PHYA-105 1 (1029 aa).

The disordered stretch occupies residues 42–69 (SETANSDCPGSSAHRNVDLTKPPPPEEA). The region spanning 188-529 (VQMKTPVSSS…ARDILKSELI (342 aa)) is the Protein kinase domain. Residues 194–202 (VSSSNFSQL) and lysine 216 contribute to the ATP site. Residues 213 to 269 (VVGKNQETPPEFVSDQDLGSKEKKLDISKSPTPHDVLPLKSSPKGNGMVSHGDGNHS) are disordered. Basic and acidic residues predominate over residues 230 to 239 (LGSKEKKLDI). Residue aspartate 316 is the Proton acceptor of the active site. The tract at residues 347-392 (EDLNRRRPVVEESSSGGRDSKKRKMDLHLNSPGNQLQATSTGRPFK) is disordered. Residues 377-388 (SPGNQLQATSTG) show a composition bias toward polar residues. The stretch at 557-589 (VQKKKKASKLLQDIQTLEDDIKEAERRYSSNVS) forms a coiled coil. A disordered region spans residues 653–679 (ARSDKTLKDRDRCSENQNENQDMSTKG). Residues 654 to 666 (RSDKTLKDRDRCS) are compositionally biased toward basic and acidic residues. Over residues 667 to 679 (ENQNENQDMSTKG) the composition is skewed to polar residues. 7 WD repeats span residues 714-753 (NSASVVCSLSFDPDEEHIAAAGISKKIKIFDFNAFMNESV), 763-803 (VNKS…GFSQ), 806-846 (EHQK…SLGT), 848-888 (WSPA…TPWC), 892-930 (GHEKAVSYVKFMDSETIVSASTDNSLKLWNLNKTNSSGL), 932-971 (PGACSLTYKGHTNQKNFVGLSVLDGYIACGSETNEVYSYY), and 997-1029 (DNGQFVSSVCWRKKSNMLVAANSTGNMKLLKLV). A DWD box motif is present at residues 866–881 (LAFGSADYKVYCYDLR).

As to quaternary structure, interacts with CO, COP1, HFR1, HY5 and PHYA. Light induces dissociation of the SPA1/COP1 complex. Binds to CRY1 in response to blue light, this interaction prevents SPA1/COP1 complex formation but stimulate CRY2/COP1 complex, and thus avoid COP1-dependent degradation of the transcription factor HY5 by the proteasome and promotes hypocotyl elongation.

The protein resides in the nucleus speckle. The protein localises to the nucleus. Its subcellular location is the PML body. Controls normal photoperiodic flowering and regulates circadian rhythms. Required for suppression of photomorphogenesis in dark-grown seedlings and for normal elongation growth of adult plants. Integral component of the COP1/SPA E3 ubiquitin-protein ligase complex. Involved in HY5, HFR1, LAF1 and CO degradation. This is Protein SUPPRESSOR OF PHYA-105 1 (SPA1) from Arabidopsis thaliana (Mouse-ear cress).